The sequence spans 261 residues: tRNA pseudouridine synthase A (261 aa).

The active-site Nucleophile is the Asp-51. Tyr-109 provides a ligand contact to substrate.

The protein belongs to the tRNA pseudouridine synthase TruA family. In terms of assembly, homodimer.

The enzyme catalyses uridine(38/39/40) in tRNA = pseudouridine(38/39/40) in tRNA. Formation of pseudouridine at positions 38, 39 and 40 in the anticodon stem and loop of transfer RNAs. The protein is tRNA pseudouridine synthase A of Tolumonas auensis (strain DSM 9187 / NBRC 110442 / TA 4).